We begin with the raw amino-acid sequence, 374 residues long: Erythronate-4-phosphate dehydrogenase (374 aa).

The substrate site is built by S45 and T67. Position 147 (D147) interacts with NAD(+). Residue R208 is part of the active site. Residue D232 participates in NAD(+) binding. E237 is a catalytic residue. Catalysis depends on H254, which acts as the Proton donor. Residue G257 participates in NAD(+) binding.

Belongs to the D-isomer specific 2-hydroxyacid dehydrogenase family. PdxB subfamily. Homodimer.

It is found in the cytoplasm. The catalysed reaction is 4-phospho-D-erythronate + NAD(+) = (R)-3-hydroxy-2-oxo-4-phosphooxybutanoate + NADH + H(+). It participates in cofactor biosynthesis; pyridoxine 5'-phosphate biosynthesis; pyridoxine 5'-phosphate from D-erythrose 4-phosphate: step 2/5. Catalyzes the oxidation of erythronate-4-phosphate to 3-hydroxy-2-oxo-4-phosphonooxybutanoate. This Pseudoalteromonas atlantica (strain T6c / ATCC BAA-1087) protein is Erythronate-4-phosphate dehydrogenase.